Reading from the N-terminus, the 365-residue chain is Outer capsid protein sigma-3 (365 aa).

The segment at 51-73 (CMHCLGVVGSLQRKLKHLPHHKC) adopts a CCHC-type zinc-finger fold.

The protein belongs to the orthoreovirus sigma-3 protein family. In terms of assembly, heterohexamer of three sigma-3 and three Mu-1 proteins. The RNA-binding form is probably a homodimer. In terms of processing, cleaved during virus the endosomal proteolytic disassembly of the outer capsid.

The protein resides in the virion. The protein localises to the host cytoplasm. It is found in the host nucleus. In terms of biological role, stimulates translation by blocking the activation of the dsRNA-dependent protein kinase EIF2AK2/PKR, thereby inhibiting the host interferon response. Sigma3 prevents the activation of EIF2AK2 by competing with the kinase for dsRNA-binding. The viral outer shell polypeptides, of which sigma-3 is one, impose structural constraints that prevent elongation of nascent transcripts by the RNA-dependent RNA polymerase lambda-3. The polypeptide is Outer capsid protein sigma-3 (S4) (Mammalia (T2J)).